The primary structure comprises 955 residues: Alpha-1,4 glucan phosphorylase L isozyme, chloroplastic/amyloplastic (955 aa).

A chloroplast-targeting transit peptide spans 1–43 (MSRLSGITPRARDDRSQFQNPRLEIAVPDRTAGLQRTKRTLLV). Residues 522–550 (KVVTESEKDELEEKDTELEKDEDPVPAPI) are disordered. The segment covering 528-545 (EKDELEEKDTELEKDEDP) has biased composition (acidic residues). K801 is modified (N6-(pyridoxal phosphate)lysine).

It belongs to the glycogen phosphorylase family. Requires pyridoxal 5'-phosphate as cofactor.

The protein localises to the plastid. It localises to the chloroplast. Its subcellular location is the amyloplast. It carries out the reaction [(1-&gt;4)-alpha-D-glucosyl](n) + phosphate = [(1-&gt;4)-alpha-D-glucosyl](n-1) + alpha-D-glucose 1-phosphate. In terms of biological role, phosphorylase is an important allosteric enzyme in carbohydrate metabolism. Enzymes from different sources differ in their regulatory mechanisms and in their natural substrates. However, all known phosphorylases share catalytic and structural properties. The protein is Alpha-1,4 glucan phosphorylase L isozyme, chloroplastic/amyloplastic of Ipomoea batatas (Sweet potato).